A 250-amino-acid chain; its full sequence is MSALLSPDQLEADLRAIGARLYHDQHPFHALLHHGKLDRGQVQAWALNRFEYQRCIPLKDAAILARMEDPTLRRIWRQRIVDHDGNSATDGGIARWLHLTDALGLDRTLVESGRALLPGTRFAVQAYLQFVSEKSLLEAIASSLTELFAPNIIGQRVAGMLKHYDFVSSDALAYFEHRLTEAPRDSDFALDYVKQHADTVEKQALVKAALHFKCSVLWAQLDALHVAYVTPGIVWPDAFVPDRDASRVAA.

This sequence belongs to the PqqC family.

It carries out the reaction 6-(2-amino-2-carboxyethyl)-7,8-dioxo-1,2,3,4,7,8-hexahydroquinoline-2,4-dicarboxylate + 3 O2 = pyrroloquinoline quinone + 2 H2O2 + 2 H2O + H(+). Its pathway is cofactor biosynthesis; pyrroloquinoline quinone biosynthesis. Its function is as follows. Ring cyclization and eight-electron oxidation of 3a-(2-amino-2-carboxyethyl)-4,5-dioxo-4,5,6,7,8,9-hexahydroquinoline-7,9-dicarboxylic-acid to PQQ. The polypeptide is Pyrroloquinoline-quinone synthase (Xanthomonas oryzae pv. oryzae (strain MAFF 311018)).